The chain runs to 472 residues: 3-isopropylmalate dehydratase large subunit (472 aa).

Residues cysteine 347, cysteine 407, and cysteine 410 each contribute to the [4Fe-4S] cluster site.

The protein belongs to the aconitase/IPM isomerase family. LeuC type 1 subfamily. As to quaternary structure, heterodimer of LeuC and LeuD. The cofactor is [4Fe-4S] cluster.

The catalysed reaction is (2R,3S)-3-isopropylmalate = (2S)-2-isopropylmalate. The protein operates within amino-acid biosynthesis; L-leucine biosynthesis; L-leucine from 3-methyl-2-oxobutanoate: step 2/4. Its function is as follows. Catalyzes the isomerization between 2-isopropylmalate and 3-isopropylmalate, via the formation of 2-isopropylmaleate. This is 3-isopropylmalate dehydratase large subunit from Synechococcus sp. (strain CC9902).